Reading from the N-terminus, the 875-residue chain is MQSIPHSDEADVAGMTHASEGHHGLGTSMLVPKNPQGEEDSKLGRNCSGFEDAQDPQTAVPSSPLLSMASCSSQEGSSPCHLLTVRIIGMKNVRQADILSQTDCFVTLWLPTASQKKLKTRTISNCLHPEWDESFTFQIQTQVKNVLELSVCDEDTLTQNDHLLTVLYDLSKLCLRNKTHVKFPLNPEGMEELEVEFLLEENFSSSETLITNGVLVSRQVSCLEVHAESRRPRKRKKNKDLLVMVTDSFENTQRVPPCQEPCYPNSACFHYPKYSQPQLYAEAPKSHCNFRLCCCGTHRNDPVCQPLNCLSDGQVTTLPVGENYELHMKSSPCSDTLDVRLGFSLCQEEVEFVQKRKMVVAKTLSQMLQLEEGLHEDEVPIIAIMATGGGTRSMVSLYGHLLGLQKLNFLDASTYITGLSGATWTMATLYSDPEWSSKNLETVVFEARRHVVKDKMPALFPDQLYKWREDLQKHSQEGYKTTFTDFWGKLIEYSLGDKKNECKLSDQRAALCRGQNPLPIYLTINVKDDVSNQDFREWFEFSPYEVGMQKYGAFIPSELFGSEFFMGRLMKRIPEPEMCYMLGLWSSIFSLNLLDAWNLSHTSEEFFYRWTRERLHDIEDDPILPEIPRCDDNPLETTVVIPTTWLSNTFREILTRRPFVSEFHNFLYGMQLHTDYLQNRQFSMWKDTVLDTFPNQLTQFAKHLNLLDTAFFVNSSYAPLLRPERKVDLIIHLNYCAGSQTKPLKQTCEYCTEQKIPFPSFSILEDDNSLKECYVMENPQEPDAPIVAYFPLISDTFQKYKAPGVERSPDELELGQLNIYGPKSPYATKELTYTEAAFDKLVKLSEYNILNNRDKLIQALRLAMEKKRMRSQCPS.

The segment at 16–70 is disordered; sequence THASEGHHGLGTSMLVPKNPQGEEDSKLGRNCSGFEDAQDPQTAVPSSPLLSMAS. Positions 60–183 constitute a C2 domain; sequence VPSSPLLSMA…CLRNKTHVKF (124 aa). A compositionally biased stretch (low complexity) spans 61–70; it reads PSSPLLSMAS. Ca(2+) is bound by residues Asp-97, Asp-103, Asp-153, Asp-155, and Asp-161. The 544-residue stretch at 332-875 folds into the PLA2c domain; the sequence is PCSDTLDVRL…KKRMRSQCPS (544 aa). The active-site Nucleophile is Ser-420. Asp-708 (proton acceptor) is an active-site residue. Ser-808 is modified (phosphoserine). Residues 865 to 875 form a required for localization at membrane structures region; the sequence is EKKRMRSQCPS.

The cofactor is Ca(2+). Predominantly expressed in brain, heart, skeletal muscle, testis and thyroid. Expressed in neurons but not astrocytes or microglia. Expressed at lower level in stomach.

The protein resides in the cytoplasm. It localises to the cytosol. It is found in the early endosome membrane. The protein localises to the lysosome membrane. Its subcellular location is the cell membrane. The enzyme catalyses a 1,2-diacyl-sn-glycero-3-phosphoethanolamine + a 1,2-diacyl-sn-glycero-3-phosphocholine = an N-acyl-1,2-diacyl-sn-glycero-3-phosphoethanolamine + a 2-acyl-sn-glycero-3-phosphocholine + H(+). It carries out the reaction 1-hexadecanoyl-2-octadecanoyl-sn-glycero-3-phosphocholine + 1,2-di-(9Z-octadecenoyl)-sn-glycero-3-phosphoethanolamine = 2-octadecanoyl-sn-glycero-3-phosphocholine + N-hexadecanoyl-1,2-di-(9Z-octadecenoyl)-sn-glycero-3-phosphoethanolamine + H(+). The catalysed reaction is 1-octadecanoyl-2-hexadecanoyl-sn-glycero-3-phosphocholine + 1,2-di-(9Z-octadecenoyl)-sn-glycero-3-phosphoethanolamine = N-octadecanoyl-1,2-di-(9Z-octadecenoyl)-sn-glycero-3-phosphoethanolamine + 2-hexadecanoyl-sn-glycero-3-phosphocholine + H(+). It catalyses the reaction 1,2-di-(9Z-octadecenoyl)-sn-glycero-3-phosphoethanolamine + 1,2-dihexadecanoyl-sn-glycero-3-phosphocholine = N-hexadecanoyl-1,2-di-(9Z-octadecenoyl)-sn-glycero-3-phosphoethanolamine + 2-hexadecanoyl-sn-glycero-3-phosphocholine + H(+). The enzyme catalyses 1,2-di-(5Z,8Z,11Z,14Z-eicosatetraenoyl)-sn-glycero-3-phosphocholine + 1,2-di-(9Z-octadecenoyl)-sn-glycero-3-phosphoethanolamine = N-(5Z,8Z,11Z,14Z-eicosatetraenoyl)-1,2-di-(9Z-octadecenoyl)-sn-glycero-3-phosphoethanolamine + 2-(5Z,8Z,11Z,14Z)-eicosatetraenoyl-sn-glycero-3-phosphocholine + H(+). It carries out the reaction 2 1,2-di-(9Z-octadecenoyl)-sn-glycero-3-phosphoethanolamine = N,1,2-tri-(9Z-octadecenoyl)-sn-glycero-3-phosphoethanolamine + 2-(9Z-octadecenoyl)-sn-glycero-3-phosphoethanolamine + H(+). The catalysed reaction is a 1,2-diacyl-sn-glycero-3-phosphocholine + H2O = a 1-acyl-sn-glycero-3-phosphocholine + a fatty acid + H(+). It catalyses the reaction 1-(1Z-octadecenyl)-2-(9Z-octadecenoyl)-sn-glycero-3-phosphoethanolamine + 1,2-dihexadecanoyl-sn-glycero-3-phosphocholine = 1-O-(1Z-octadecenoyl)-2-(9Z-octadecenoyl)-sn-glycero-3-phospho-N-hexadecanoyl-ethanolamine + 2-hexadecanoyl-sn-glycero-3-phosphocholine + H(+). The enzyme catalyses 1-hexadecanoyl-2-(5Z,8Z,11Z,14Z-eicosatetraenoyl)-sn-glycero-3-phosphocholine + H2O = 1-hexadecanoyl-sn-glycero-3-phosphocholine + (5Z,8Z,11Z,14Z)-eicosatetraenoate + H(+). It carries out the reaction 1-hexadecanoyl-sn-glycero-3-phosphocholine + H2O = sn-glycerol 3-phosphocholine + hexadecanoate + H(+). Stimulated by cytosolic Ca(2+). Stimulated by anionic phospholipids such as phosphatidylserine. Calcium-dependent N-acyltransferase involved in the biosynthesis of N-acyl ethanolamines (NAEs) in the brain. Transfers the sn-1 fatty acyl chain of phosphatidylcholine (fatty acyl donor) to the amine group of phosphatidylethanolamine (fatty acyl acceptor) to generate N-acyl phosphatidylethanolamine (NAPE). Similarly can use plasmenylethanolamine as a fatty acyl acceptor to form N-acyl plasmenylethanolamine (N-Acyl-PlsEt). Both NAPE and N-Acyl-PlsEt can serve as precursors of bioactive NAEs like N-arachidonoyl phosphatidylethanolamine also called anandamide. Has weak phospholipase A2 and lysophospholipase activities. Regulates intracellular membrane trafficking that requires modulation of membrane curvature as it occurs by enrichment in lysophospholipids. Promotes tubule formation involved in clathrin-independent endocytotic trafficking and cargo recycling. This is Cytosolic phospholipase A2 epsilon (Pla2g4e) from Mus musculus (Mouse).